The following is a 211-amino-acid chain: Orotate phosphoribosyltransferase (211 aa).

Residues Arg103, Lys107, His109, and 129 to 137 (EDLISTGKS) each bind 5-phospho-alpha-D-ribose 1-diphosphate. Ser133 provides a ligand contact to orotate.

It belongs to the purine/pyrimidine phosphoribosyltransferase family. PyrE subfamily. Homodimer. Requires Mg(2+) as cofactor.

It catalyses the reaction orotidine 5'-phosphate + diphosphate = orotate + 5-phospho-alpha-D-ribose 1-diphosphate. Its pathway is pyrimidine metabolism; UMP biosynthesis via de novo pathway; UMP from orotate: step 1/2. Functionally, catalyzes the transfer of a ribosyl phosphate group from 5-phosphoribose 1-diphosphate to orotate, leading to the formation of orotidine monophosphate (OMP). This Fusobacterium nucleatum subsp. nucleatum (strain ATCC 25586 / DSM 15643 / BCRC 10681 / CIP 101130 / JCM 8532 / KCTC 2640 / LMG 13131 / VPI 4355) protein is Orotate phosphoribosyltransferase.